Consider the following 21-residue polypeptide: uncharacterized protein (21 aa).

This is an uncharacterized protein from Escherichia coli (strain K12).